We begin with the raw amino-acid sequence, 142 residues long: Hemoglobin subunit alpha-A (142 aa).

Residues 2–142 (VLSAADKTNV…VGTVLTAKYR (141 aa)) form the Globin domain. H59 is an O2 binding site. H88 provides a ligand contact to heme b.

The protein belongs to the globin family. Heterotetramer of two alpha chains and two beta chains. Red blood cells.

Involved in oxygen transport from the lung to the various peripheral tissues. The protein is Hemoglobin subunit alpha-A (HBAA) of Anser anser anser (Western greylag goose).